The chain runs to 446 residues: Glucose-6-phosphate isomerase (446 aa).

Glu-288 functions as the Proton donor in the catalytic mechanism. Active-site residues include His-309 and Lys-423.

It belongs to the GPI family.

It localises to the cytoplasm. It catalyses the reaction alpha-D-glucose 6-phosphate = beta-D-fructose 6-phosphate. The protein operates within carbohydrate biosynthesis; gluconeogenesis. It functions in the pathway carbohydrate degradation; glycolysis; D-glyceraldehyde 3-phosphate and glycerone phosphate from D-glucose: step 2/4. Catalyzes the reversible isomerization of glucose-6-phosphate to fructose-6-phosphate. This is Glucose-6-phosphate isomerase from Lactobacillus delbrueckii subsp. bulgaricus (strain ATCC 11842 / DSM 20081 / BCRC 10696 / JCM 1002 / NBRC 13953 / NCIMB 11778 / NCTC 12712 / WDCM 00102 / Lb 14).